A 126-amino-acid chain; its full sequence is Histone H2B type 1-N (126 aa).

Positions 1 to 12 (MPEPSKSAPAPK) are enriched in low complexity. The tract at residues 1–36 (MPEPSKSAPAPKKGSKKAVTKAQKKDGKKRKRSRKE) is disordered. Position 2 is an N-acetylproline (P2). E3 bears the ADP-ribosyl glutamic acid mark. An N6-(2-hydroxyisobutyryl)lysine; alternate modification is found at K6. K6 bears the N6-(beta-hydroxybutyryl)lysine; alternate mark. K6 carries the N6-acetyllysine; alternate modification. Position 6 is an N6-butyryllysine; alternate (K6). At K6 the chain carries N6-crotonyllysine; alternate. Residue K6 is modified to N6-lactoyllysine; alternate. A Glycyl lysine isopeptide (Lys-Gly) (interchain with G-Cter in SUMO2); alternate cross-link involves residue K6. Residue S7 is modified to ADP-ribosylserine. The residue at position 12 (K12) is an N6-(beta-hydroxybutyryl)lysine; alternate. N6-acetyllysine; alternate occurs at positions 12 and 13. Residues K12 and K13 each carry the N6-crotonyllysine; alternate modification. The residue at position 12 (K12) is an N6-lactoyllysine; alternate. An N6-(2-hydroxyisobutyryl)lysine; alternate modification is found at K13. S15 bears the Phosphoserine; by STK4/MST1 mark. K16, K17, K21, and K24 each carry N6-acetyllysine; alternate. An N6-crotonyllysine; alternate mark is found at K16, K17, K21, and K24. N6-lactoyllysine; alternate occurs at positions 16, 17, 21, and 24. 2 positions are modified to N6-(beta-hydroxybutyryl)lysine; alternate: K17 and K21. K17 is modified (N6-glutaryllysine; alternate). 2 positions are modified to N6-(2-hydroxyisobutyryl)lysine; alternate: K21 and K24. K21 is subject to N6-butyryllysine; alternate. Residue K21 forms a Glycyl lysine isopeptide (Lys-Gly) (interchain with G-Cter in SUMO2); alternate linkage. K25 carries the post-translational modification N6-(2-hydroxyisobutyryl)lysine. An N6-(2-hydroxyisobutyryl)lysine; alternate modification is found at K35. K35 is subject to N6-(beta-hydroxybutyryl)lysine; alternate. K35 is subject to N6-crotonyllysine; alternate. K35 is modified (N6-glutaryllysine; alternate). K35 bears the N6-succinyllysine; alternate mark. K35 participates in a covalent cross-link: Glycyl lysine isopeptide (Lys-Gly) (interchain with G-Cter in ubiquitin); alternate. E36 is modified (polyADP-ribosyl glutamic acid). Phosphoserine; by AMPK is present on S37. N6-(2-hydroxyisobutyryl)lysine; alternate occurs at positions 44, 47, and 58. The residue at position 44 (K44) is an N6-lactoyllysine; alternate. 2 positions are modified to N6-glutaryllysine; alternate: K44 and K47. At K47 the chain carries N6-methyllysine; alternate. K58 is modified (N6,N6-dimethyllysine; alternate). The residue at position 80 (R80) is a Dimethylated arginine. At K86 the chain carries N6-(2-hydroxyisobutyryl)lysine; alternate. The residue at position 86 (K86) is an N6-(beta-hydroxybutyryl)lysine; alternate. Residue K86 is modified to N6-acetyllysine; alternate. Residue K86 is modified to N6-lactoyllysine; alternate. K86 is subject to N6,N6,N6-trimethyllysine; alternate. Omega-N-methylarginine is present on residues R87 and R93. K109 is modified (N6-(2-hydroxyisobutyryl)lysine; alternate). K109 carries the N6-lactoyllysine; alternate modification. K109 carries the post-translational modification N6-glutaryllysine; alternate. K109 carries the N6-methyllysine; alternate modification. S113 carries an O-linked (GlcNAc) serine glycan. T116 carries the post-translational modification Phosphothreonine. N6-(2-hydroxyisobutyryl)lysine; alternate occurs at positions 117 and 121. K117 and K121 each carry N6-(beta-hydroxybutyryl)lysine; alternate. 2 positions are modified to N6-lactoyllysine; alternate: K117 and K121. 2 positions are modified to N6-glutaryllysine; alternate: K117 and K121. Residues K117 and K121 each carry the N6-succinyllysine; alternate modification. The residue at position 117 (K117) is an N6-malonyllysine; alternate. K117 carries the post-translational modification N6-methylated lysine; alternate. Residue K121 forms a Glycyl lysine isopeptide (Lys-Gly) (interchain with G-Cter in ubiquitin); alternate linkage.

This sequence belongs to the histone H2B family. As to quaternary structure, the nucleosome is a histone octamer containing two molecules each of H2A, H2B, H3 and H4 assembled in one H3-H4 heterotetramer and two H2A-H2B heterodimers. The octamer wraps approximately 147 bp of DNA. In terms of processing, monoubiquitination at Lys-35 (H2BK34Ub) by the MSL1/MSL2 dimer is required for histone H3 'Lys-4' (H3K4me) and 'Lys-79' (H3K79me) methylation and transcription activation at specific gene loci, such as HOXA9 and MEIS1 loci. Similarly, monoubiquitination at Lys-121 (H2BK120Ub) by the RNF20/40 complex gives a specific tag for epigenetic transcriptional activation and is also prerequisite for histone H3 'Lys-4' and 'Lys-79' methylation. It also functions cooperatively with the FACT dimer to stimulate elongation by RNA polymerase II. H2BK120Ub also acts as a regulator of mRNA splicing: deubiquitination by USP49 is required for efficient cotranscriptional splicing of a large set of exons. Post-translationally, phosphorylation at Ser-37 (H2BS36ph) by AMPK in response to stress promotes transcription. Phosphorylated on Ser-15 (H2BS14ph) by STK4/MST1 during apoptosis; which facilitates apoptotic chromatin condensation. Also phosphorylated on Ser-15 in response to DNA double strand breaks (DSBs), and in correlation with somatic hypermutation and immunoglobulin class-switch recombination. GlcNAcylation at Ser-113 promotes monoubiquitination of Lys-121. It fluctuates in response to extracellular glucose, and associates with transcribed genes. In terms of processing, ADP-ribosylated by PARP1 or PARP2 on Ser-7 (H2BS6ADPr) in response to DNA damage. H2BS6ADPr promotes recruitment of CHD1L. Mono-ADP-ribosylated on Glu-3 (H2BE2ADPr) by PARP3 in response to single-strand breaks. Poly ADP-ribosylation on Glu-36 (H2BE35ADPr) by PARP1 regulates adipogenesis: it inhibits phosphorylation at Ser-37 (H2BS36ph), thereby blocking expression of pro-adipogenetic genes. Post-translationally, crotonylation (Kcr) is specifically present in male germ cells and marks testis-specific genes in post-meiotic cells, including X-linked genes that escape sex chromosome inactivation in haploid cells. Crotonylation marks active promoters and enhancers and confers resistance to transcriptional repressors. It is also associated with post-meiotically activated genes on autosomes. Lactylated in macrophages by EP300/P300 by using lactoyl-CoA directly derived from endogenous or exogenous lactate, leading to stimulates gene transcription.

The protein localises to the nucleus. It is found in the chromosome. In terms of biological role, core component of nucleosome. Nucleosomes wrap and compact DNA into chromatin, limiting DNA accessibility to the cellular machineries which require DNA as a template. Histones thereby play a central role in transcription regulation, DNA repair, DNA replication and chromosomal stability. DNA accessibility is regulated via a complex set of post-translational modifications of histones, also called histone code, and nucleosome remodeling. This is Histone H2B type 1-N from Homo sapiens (Human).